Consider the following 188-residue polypeptide: Quinone reductase (188 aa).

FMN contacts are provided by residues 13-20 (SLRKGSFN), 82-85 (EYNY), and Ser-117.

It belongs to the SsuE family. In terms of assembly, homotetramer. Dimer of dimers. The tetrameric configuration has a central role in chromate reductase activity. FMN serves as cofactor.

The enzyme catalyses a quinone + NADH + H(+) = a quinol + NAD(+). It carries out the reaction a quinone + NADPH + H(+) = a quinol + NADP(+). It catalyses the reaction Cr(6+) + 2 NADH + O2 = Cr(3+) + superoxide + 2 NAD(+) + 2 H(+). The catalysed reaction is Cr(6+) + 2 NADPH + O2 = Cr(3+) + superoxide + 2 NADP(+) + 2 H(+). Its function is as follows. Catalyzes the reduction of quinones. Acts by simultaneous two-electron transfer, avoiding formation of highly reactive semiquinone intermediates and producing quinols that promote tolerance of H(2)O(2). Quinone reduction is probably the primary biological role of ChrR. Can also reduce toxic chromate to insoluble and less toxic Cr(3+). Catalyzes the transfer of three electrons to Cr(6+) producing Cr(3+) and one electron to molecular oxygen without producing the toxic Cr(5+) species and only producing a minimal amount of reactive oxygen species (ROS). Chromate reduction protects the cell against chromate toxicity, but is likely a secondary activity. This Escherichia coli O157:H7 protein is Quinone reductase (chrR).